The sequence spans 350 residues: Putative ATP-binding protein BRA0745/BS1330_II0738 (350 aa).

The region spanning 4–234 is the ABC transporter domain; it reads VSLRGISKTF…PANKFVAGFI (231 aa). 36–43 lines the ATP pocket; the sequence is GPSGCGKS.

It belongs to the ABC transporter superfamily. The complex is composed of two ATP-binding proteins (BRA0745), two transmembrane proteins (BRA0749) and a solute-binding protein (BRA0748).

The protein resides in the cell inner membrane. Probably part of an ABC transporter complex. Probably responsible for energy coupling to the transport system. The polypeptide is Putative ATP-binding protein BRA0745/BS1330_II0738 (Brucella suis biovar 1 (strain 1330)).